The primary structure comprises 553 residues: Membrane protein insertase YidC (553 aa).

A run of 5 helical transmembrane segments spans residues 7–24 (VLWV…DNWQ), 365–385 (WGWA…PLSA), 435–455 (LPVV…LASV), 474–494 (PYFI…SLNP), and 509–529 (PIAF…YYVV).

The protein belongs to the OXA1/ALB3/YidC family. Type 1 subfamily. In terms of assembly, interacts with the Sec translocase complex via SecD. Specifically interacts with transmembrane segments of nascent integral membrane proteins during membrane integration.

The protein localises to the cell inner membrane. Its function is as follows. Required for the insertion and/or proper folding and/or complex formation of integral membrane proteins into the membrane. Involved in integration of membrane proteins that insert both dependently and independently of the Sec translocase complex, as well as at least some lipoproteins. Aids folding of multispanning membrane proteins. The polypeptide is Membrane protein insertase YidC (Burkholderia multivorans (strain ATCC 17616 / 249)).